Reading from the N-terminus, the 357-residue chain is Chorismate synthase (357 aa).

Arginine 47 lines the NADP(+) pocket. FMN contacts are provided by residues 123–125, glycine 281, 296–300, and arginine 324; these read RSS and KPTSS.

Belongs to the chorismate synthase family. In terms of assembly, homotetramer. Requires FMNH2 as cofactor.

It carries out the reaction 5-O-(1-carboxyvinyl)-3-phosphoshikimate = chorismate + phosphate. Its pathway is metabolic intermediate biosynthesis; chorismate biosynthesis; chorismate from D-erythrose 4-phosphate and phosphoenolpyruvate: step 7/7. Its function is as follows. Catalyzes the anti-1,4-elimination of the C-3 phosphate and the C-6 proR hydrogen from 5-enolpyruvylshikimate-3-phosphate (EPSP) to yield chorismate, which is the branch point compound that serves as the starting substrate for the three terminal pathways of aromatic amino acid biosynthesis. This reaction introduces a second double bond into the aromatic ring system. In Chlamydia muridarum (strain MoPn / Nigg), this protein is Chorismate synthase.